The chain runs to 257 residues: 5'-nucleotidase SurE (257 aa).

A divalent metal cation-binding residues include aspartate 8, aspartate 9, serine 40, and asparagine 97.

Belongs to the SurE nucleotidase family. It depends on a divalent metal cation as a cofactor.

The protein localises to the cytoplasm. It catalyses the reaction a ribonucleoside 5'-phosphate + H2O = a ribonucleoside + phosphate. Its function is as follows. Nucleotidase that shows phosphatase activity on nucleoside 5'-monophosphates. This chain is 5'-nucleotidase SurE, found in Desulforudis audaxviator (strain MP104C).